Consider the following 713-residue polypeptide: Subtilisin-like protease SBT4.9 (713 aa).

Positions 1–24 (MARRADSFCLISCVLVSFVISVSA) are cleaved as a signal peptide. Positions 25-113 (VTDDSQDKQV…VFPDINYKLQ (89 aa)) are cleaved as a propeptide — activation peptide. The 79-residue stretch at 34-112 (VYVVYMGSLP…SVFPDINYKL (79 aa)) folds into the Inhibitor I9 domain. The Peptidase S8 domain occupies 117 to 560 (SWDFLGLKEG…AGHVDPIAAI (444 aa)). The active-site Charge relay system is the Asp145. An N-linked (GlcNAc...) asparagine glycan is attached at Asn176. His200 functions as the Charge relay system in the catalytic mechanism. N-linked (GlcNAc...) asparagine glycans are attached at residues Asn215 and Asn223. The region spanning 356-415 (NYPLYGGSTDGPLLRGKILVSEDKVSSEIVVANINENYHDYAYVSILPSSALSKDDFDSV) is the PA domain. Asn420 carries an N-linked (GlcNAc...) asparagine glycan. The active-site Charge relay system is Ser499. Residues Asn536, Asn583, Asn627, and Asn637 are each glycosylated (N-linked (GlcNAc...) asparagine).

It belongs to the peptidase S8 family. In terms of processing, the C-terminal propeptide is autocleaved.

It is found in the secreted. The polypeptide is Subtilisin-like protease SBT4.9 (Arabidopsis thaliana (Mouse-ear cress)).